The sequence spans 605 residues: Aspartate--tRNA(Asp/Asn) ligase (605 aa).

Glutamate 176 is a binding site for L-aspartate. Residues 200-203 form an aspartate region; it reads QQFK. Residues arginine 222 and histidine 452 each coordinate L-aspartate. 222–224 serves as a coordination point for ATP; it reads RDE. Glutamate 490 is a binding site for ATP. Arginine 497 is a binding site for L-aspartate. Position 542–545 (542–545) interacts with ATP; it reads GIDR.

Belongs to the class-II aminoacyl-tRNA synthetase family. Type 1 subfamily. In terms of assembly, homodimer.

The protein resides in the cytoplasm. It carries out the reaction tRNA(Asx) + L-aspartate + ATP = L-aspartyl-tRNA(Asx) + AMP + diphosphate. Aspartyl-tRNA synthetase with relaxed tRNA specificity since it is able to aspartylate not only its cognate tRNA(Asp) but also tRNA(Asn). Reaction proceeds in two steps: L-aspartate is first activated by ATP to form Asp-AMP and then transferred to the acceptor end of tRNA(Asp/Asn). The chain is Aspartate--tRNA(Asp/Asn) ligase from Rickettsia prowazekii (strain Madrid E).